Reading from the N-terminus, the 1200-residue chain is Chromosome partition protein Smc (1200 aa).

ATP is bound at residue 32–39 (PNGCGKSN). 2 coiled-coil regions span residues 171–219 (VTKY…AEKY) and 252–342 (LENL…MSEA). Residues 528–644 (QGIFGLVADV…QDVATARAWT (117 aa)) enclose the SMC hinge domain. Coiled coils occupy residues 679 to 706 (ALQK…ILTR) and 735 to 762 (LASQ…LEVE). Residues 763–795 (EGQLTQSHQALEHEEEASRGEVAHGQADREGRE) form a disordered region. Positions 772–795 (ALEHEEEASRGEVAHGQADREGRE) are enriched in basic and acidic residues. Positions 1002 to 1039 (HAELSKRYDFLTAQKKDLQSSIEQLKEAIQRIDATSRE) form a coiled coil.

Belongs to the SMC family. Homodimer. Probably forms the Structural Maintenance of Chromosome (SMC) condensin-like complex with ScpA and ScpB.

It is found in the cytoplasm. Its function is as follows. A conditionally essential component of the chromosome segregation machinery. Required for chromosome condensation and partitioning. Important for positioning of ParB-parS complexes (ori of replication) and of the ter replication site, as well as for segration of the ParB-parS complex and thus chromosome segregation. May act via the formation of a condensin-like complex containing Smc, ScpA and ScpB that pulls DNA away from mid-cell into both cell halves. In Myxococcus xanthus (strain DK1622), this protein is Chromosome partition protein Smc.